A 457-amino-acid chain; its full sequence is L-asparaginase-like protein GA18140 (457 aa).

An N-terminal signal peptide occupies residues 1–20; sequence MRYLCRAQLLSLLLLPLLKA. Disulfide bonds link C72/C78, C172/C188, and C327/C354.

This sequence belongs to the Ntn-hydrolase family.

The protein is L-asparaginase-like protein GA18140 of Drosophila pseudoobscura pseudoobscura (Fruit fly).